The chain runs to 319 residues: Lipase 1 (319 aa).

Ser189 serves as the catalytic Nucleophile. Positions 314 and 317 each coordinate Ca(2+).

It catalyses the reaction a triacylglycerol + H2O = a diacylglycerol + a fatty acid + H(+). The chain is Lipase 1 (lip1) from Moraxella sp. (strain TA144).